The sequence spans 185 residues: Ribosome-recycling factor (185 aa).

This sequence belongs to the RRF family.

The protein resides in the cytoplasm. In terms of biological role, responsible for the release of ribosomes from messenger RNA at the termination of protein biosynthesis. May increase the efficiency of translation by recycling ribosomes from one round of translation to another. This is Ribosome-recycling factor from Clavibacter sepedonicus (Clavibacter michiganensis subsp. sepedonicus).